Reading from the N-terminus, the 535-residue chain is GMP synthase [glutamine-hydrolyzing] (535 aa).

The Glutamine amidotransferase type-1 domain occupies 24 to 217; sequence KILIVDFGSQ…VRNISGLGGD (194 aa). Cys101 acts as the Nucleophile in catalysis. Residues His191 and Glu193 contribute to the active site. In terms of domain architecture, GMPS ATP-PPase spans 218-410; it reads WTMHAFREEE…LGLPDVFVGR (193 aa). ATP is bound at residue 245–251; it reads SGGVDSA.

Homodimer.

The enzyme catalyses XMP + L-glutamine + ATP + H2O = GMP + L-glutamate + AMP + diphosphate + 2 H(+). The protein operates within purine metabolism; GMP biosynthesis; GMP from XMP (L-Gln route): step 1/1. Catalyzes the synthesis of GMP from XMP. The chain is GMP synthase [glutamine-hydrolyzing] from Bradyrhizobium sp. (strain ORS 278).